The following is a 447-amino-acid chain: Argininosuccinate synthase (447 aa).

Residues 17-25 and Ala43 contribute to the ATP site; that span reads AFSGGLDTS. Tyr99 provides a ligand contact to L-citrulline. The ATP site is built by Gly129 and Thr131. Thr131, Asn135, and Asp136 together coordinate L-aspartate. Asn135 provides a ligand contact to L-citrulline. An ATP-binding site is contributed by Asp136. Positions 139 and 192 each coordinate L-citrulline. Asp194 contributes to the ATP binding site. L-citrulline-binding residues include Thr201, Glu203, and Glu280.

The protein belongs to the argininosuccinate synthase family. Type 2 subfamily. As to quaternary structure, homotetramer.

The protein localises to the cytoplasm. The catalysed reaction is L-citrulline + L-aspartate + ATP = 2-(N(omega)-L-arginino)succinate + AMP + diphosphate + H(+). It functions in the pathway amino-acid biosynthesis; L-arginine biosynthesis; L-arginine from L-ornithine and carbamoyl phosphate: step 2/3. The sequence is that of Argininosuccinate synthase from Citrobacter koseri (strain ATCC BAA-895 / CDC 4225-83 / SGSC4696).